Here is an 86-residue protein sequence, read N- to C-terminus: Small ribosomal subunit protein bS20 (86 aa).

This sequence belongs to the bacterial ribosomal protein bS20 family.

Functionally, binds directly to 16S ribosomal RNA. This is Small ribosomal subunit protein bS20 from Aliarcobacter butzleri (strain RM4018) (Arcobacter butzleri).